Reading from the N-terminus, the 571-residue chain is Phosphomethylpyrimidine synthase (571 aa).

Substrate is bound by residues Asn201, Met230, Tyr259, His295, Ser315–Gly317, Asp356–Arg359, and Glu395. His399 provides a ligand contact to Zn(2+). Position 422 (Tyr422) interacts with substrate. His463 is a Zn(2+) binding site. Cys545, Cys548, and Cys553 together coordinate [4Fe-4S] cluster.

This sequence belongs to the ThiC family. The cofactor is [4Fe-4S] cluster.

The enzyme catalyses 5-amino-1-(5-phospho-beta-D-ribosyl)imidazole + S-adenosyl-L-methionine = 4-amino-2-methyl-5-(phosphooxymethyl)pyrimidine + CO + 5'-deoxyadenosine + formate + L-methionine + 3 H(+). The protein operates within cofactor biosynthesis; thiamine diphosphate biosynthesis. In terms of biological role, catalyzes the synthesis of the hydroxymethylpyrimidine phosphate (HMP-P) moiety of thiamine from aminoimidazole ribotide (AIR) in a radical S-adenosyl-L-methionine (SAM)-dependent reaction. The polypeptide is Phosphomethylpyrimidine synthase (Chlorobium phaeovibrioides (strain DSM 265 / 1930) (Prosthecochloris vibrioformis (strain DSM 265))).